The following is a 136-amino-acid chain: NADPH-dependent 7-cyano-7-deazaguanine reductase (136 aa).

The Thioimide intermediate role is filled by cysteine 50. Aspartate 57 serves as the catalytic Proton donor. Residues 72–74 and 91–92 contribute to the substrate site; these read YEL and HE.

It belongs to the GTP cyclohydrolase I family. QueF type 1 subfamily.

The protein resides in the cytoplasm. It carries out the reaction 7-aminomethyl-7-carbaguanine + 2 NADP(+) = 7-cyano-7-deazaguanine + 2 NADPH + 3 H(+). The protein operates within tRNA modification; tRNA-queuosine biosynthesis. Functionally, catalyzes the NADPH-dependent reduction of 7-cyano-7-deazaguanine (preQ0) to 7-aminomethyl-7-deazaguanine (preQ1). The polypeptide is NADPH-dependent 7-cyano-7-deazaguanine reductase (Prochlorococcus marinus (strain MIT 9215)).